We begin with the raw amino-acid sequence, 325 residues long: Leucine carboxyl methyltransferase 1 (325 aa).

S-adenosyl-L-methionine-binding positions include R79, G104, D127, D174 to L175, and E200.

It belongs to the methyltransferase superfamily. LCMT family.

It catalyses the reaction [phosphatase 2A protein]-C-terminal L-leucine + S-adenosyl-L-methionine = [phosphatase 2A protein]-C-terminal L-leucine methyl ester + S-adenosyl-L-homocysteine. Methylates the carboxyl group of the C-terminal leucine residue of protein phosphatase 2A catalytic subunits to form alpha-leucine ester residues. The protein is Leucine carboxyl methyltransferase 1 (PPM1) of Eremothecium gossypii (strain ATCC 10895 / CBS 109.51 / FGSC 9923 / NRRL Y-1056) (Yeast).